Reading from the N-terminus, the 899-residue chain is Calcium-transporting ATPase 1 (899 aa).

4 helical membrane passes run 59–79 (FVKD…VTLG), 80–100 (NIDD…VGFV), 247–267 (QLSL…FFQG), and 282–302 (VAAI…LGVL). Aspartate 329 serves as the catalytic 4-aspartylphosphate intermediate. 4 helical membrane-spanning segments follow: residues 688–708 (FQLS…VFGF), 757–777 (QLLQ…IVVF), 827–847 (FNIA…ASPF), and 854–874 (EAIG…VLWV). Position 892 is a phosphoserine (serine 892).

Belongs to the cation transport ATPase (P-type) (TC 3.A.3) family.

It localises to the endoplasmic reticulum membrane. It catalyses the reaction Ca(2+)(in) + ATP + H2O = Ca(2+)(out) + ADP + phosphate + H(+). Functionally, transports calcium and manganese ions into the cell. Regulates cell morphogenesis through control of manganese and calcium homeostasis. This chain is Calcium-transporting ATPase 1 (pmr1), found in Schizosaccharomyces pombe (strain 972 / ATCC 24843) (Fission yeast).